A 310-amino-acid polypeptide reads, in one-letter code: Homoserine kinase (310 aa).

Residue 91-101 (PIGSGLGSSAC) coordinates ATP.

The protein belongs to the GHMP kinase family. Homoserine kinase subfamily.

The protein localises to the cytoplasm. It catalyses the reaction L-homoserine + ATP = O-phospho-L-homoserine + ADP + H(+). It functions in the pathway amino-acid biosynthesis; L-threonine biosynthesis; L-threonine from L-aspartate: step 4/5. In terms of biological role, catalyzes the ATP-dependent phosphorylation of L-homoserine to L-homoserine phosphate. The chain is Homoserine kinase from Escherichia coli (strain SMS-3-5 / SECEC).